Consider the following 837-residue polypeptide: SLIT and NTRK-like protein 4 (837 aa).

Positions 1 to 18 (MFLWLFLIVSALISSTNA) are cleaved as a signal peptide. Residues 19 to 618 (DSDISVEICN…SPPGGPVPLS (600 aa)) are Extracellular-facing. 6 LRR repeats span residues 60 to 81 (NFYH…TFVN), 84 to 105 (HAVS…AFLG), 108 to 129 (ALKQ…TFLG), 132 to 153 (NLEY…AFNK), 156 to 177 (KLKV…IFRF), and 179 to 200 (SLTH…GVLE). Residue Asn-81 is glycosylated (N-linked (GlcNAc...) asparagine). In terms of domain architecture, LRRCT 1 spans 213 to 264 (NPWNCSCDLLPLKAWLENMPYNIYIGEAICETPSDLYGRLLKETNKQELCPM). Asn-325 carries an N-linked (GlcNAc...) asparagine glycan. The LRRNT domain occupies 333–375 (QTRVPPLTPCPVPCFCKTHPSDLGLSVNCQEKNIQSMSELTPK). 6 LRR repeats span residues 378-399 (NAKK…DFTE), 402-423 (GLDL…VFHN), 426-447 (NLRR…IFSG), 450-471 (NLQY…TFDS), 474-495 (NLQL…IFSG), and 497-518 (PLAR…GVLD). The N-linked (GlcNAc...) asparagine glycan is linked to Asn-423. The LRRCT 2 domain maps to 531-582 (NPWDCTCDLVALKLWLEKLNDGIVVKELKCETPVQFANIELKSLKNEILCPK). The chain crosses the membrane as a helical span at residues 619 to 639 (ILILSILVVLILTVFVAFCLL). Residues 640–837 (VFVLRRNKKP…LEEQTALNKI (198 aa)) lie on the Cytoplasmic side of the membrane.

This sequence belongs to the SLITRK family. In terms of assembly, interacts (via LRR 1 and 2 repeats) with PTPRD (via extracellular domain). As to expression, in the adult, significant expression is detected only in the brain. Broadly expressed in embryonic brain with highest expression in subventricular zone, subplate, cortical plate, pyramidal cell layer of hippocampus, thalamus and hypothalamus.

It is found in the membrane. It localises to the cell membrane. It is involved in synaptogenesis and promotes synapse differentiation. Suppresses neurite outgrowth. The chain is SLIT and NTRK-like protein 4 (Slitrk4) from Mus musculus (Mouse).